The following is a 475-amino-acid chain: Terminase, large subunit (475 aa).

The interval 1–58 (MELDAILDNLSDEEQIELLELLEEEENYRNTHLLYEFTPYSKQREFIDAGHDYQSDVL) is interaction with the terminase small subunit. Positions 1–282 (MELDAILDNL…EHEREARARG (282 aa)) are ATPase activity. The segment at 308–475 (DHFYVIDAQD…MRLRQDDARY (168 aa)) is nuclease activity. Residues Asp317 and Asp455 each contribute to the Mg(2+) site.

The protein belongs to the Lederbergvirus large terminase family. As to quaternary structure, interacts with the terminase small subunit; the active complex is composed of dimer of terminase large subunits and a nonamer ring of terminase small subunits. Interacts with the portal protein; this interaction allows the packaging of viral DNA. The cofactor is Mg(2+).

Functionally, the terminase large subunit acts as an ATP driven molecular motor necessary for viral DNA translocation into empty capsids and as an endonuclease that cuts the viral genome to initiate and to end a packaging reaction. The terminase lies at a unique vertex of the procapsid and is composed of two subunits, a small terminase subunit involved in viral DNA recognition (packaging 'pac' sequence), and a large terminase subunit possessing endonucleolytic and ATPase activities. Both terminase subunits heterooligomerize and are docked on the portal protein to form the packaging machine. The terminase large subunit exhibits endonuclease activity and cleaves the viral genome concatemer once the capsid is full (headful packaging). Once the capsid is packaged with the DNA, the terminase complex is substituted by the tail. The protein is Terminase, large subunit (2) of Salmonella (Bacteriophage LP7).